The chain runs to 114 residues: Putative antiporter subunit mnhC2 (114 aa).

Helical transmembrane passes span 3–23 (LILL…ILSI), 28–48 (IVIG…SMGT), and 72–92 (AIVL…LVLV).

Belongs to the CPA3 antiporters (TC 2.A.63) subunit C family. May form a heterooligomeric complex that consists of seven subunits: mnhA2, mnhB2, mnhC2, mnhD2, mnhE2, mnhF2 and mnhG2.

Its subcellular location is the cell membrane. In Staphylococcus aureus (strain Mu3 / ATCC 700698), this protein is Putative antiporter subunit mnhC2 (mnhC2).